Consider the following 434-residue polypeptide: Septin-6 (434 aa).

A2 is subject to N-acetylalanine. S27 carries the post-translational modification Phosphoserine. Residues 39-305 form the Septin-type G domain; that stretch reads QGFCFNILCV…ELYRRCKLEE (267 aa). A G1 motif region spans residues 49–56; it reads GETGLGKS. Residues 49-56, G104, 185-193, G239, and R254 contribute to the GTP site; these read GETGLGKS and KSDAISKSE. The G3 motif stretch occupies residues 101-104; that stretch reads STVG. The segment at 184–187 is G4 motif; sequence AKSD. Residues 321–407 adopt a coiled-coil conformation; it reads QETYEAKRNE…QRKAAAELLQ (87 aa). At K367 the chain carries N6-acetyllysine. The segment at 403 to 434 is disordered; that stretch reads AELLQSQGSQAGGSQTLKRDKEKKNNPWLCIE. A compositionally biased stretch (low complexity) spans 407 to 417; the sequence is QSQGSQAGGSQ. Position 416 is a phosphoserine (S416). Phosphothreonine is present on T418.

The protein belongs to the TRAFAC class TrmE-Era-EngA-EngB-Septin-like GTPase superfamily. Septin GTPase family. In terms of assembly, septins polymerize into heterooligomeric protein complexes that form filaments, and associate with cellular membranes, actin filaments and microtubules. GTPase activity is required for filament formation. Filaments are assembled from asymmetrical heterotrimers, composed of SEPTIN2, SEPTIN6 and SEPTIN7 that associate head-to-head to form a hexameric unit. Within the trimer, directly interacts with SEPTIN2 and SEPTIN7. Also interacts with SEPTIN9 and SEPTIN12. Interaction with SEPTIN12 alters filament structure. Component of a septin core octameric complex consisting of SEPTIN12, SEPTIN7, SEPTIN6 and SEPTIN2 or SEPTIN4 in the order 12-7-6-2-2-6-7-12 or 12-7-6-4-4-6-7-12 and located in the sperm annulus. Interacts with SOCS7. Interacts with HNRNPA1. Expressed in the cerebral cortex (at protein level). Associated with synaptic vesicles in various brain regions, including glomeruli of the olfactory bulb (at protein level).

The protein localises to the cytoplasm. The protein resides in the cytoskeleton. It is found in the spindle. Its subcellular location is the chromosome. It localises to the centromere. The protein localises to the kinetochore. The protein resides in the cleavage furrow. It is found in the midbody. Its subcellular location is the cell projection. It localises to the cilium. The protein localises to the flagellum. Its function is as follows. Filament-forming cytoskeletal GTPase. Required for normal organization of the actin cytoskeleton. Involved in cytokinesis. Forms a filamentous structure with SEPTIN12, SEPTIN6, SEPTIN2 and probably SEPTIN4 at the sperm annulus which is required for the structural integrity and motility of the sperm tail during postmeiotic differentiation. The protein is Septin-6 of Mus musculus (Mouse).